The primary structure comprises 402 residues: Putative PDZ domain-containing protein PDZK1P1 (402 aa).

2 consecutive PDZ domains span residues 12 to 93 (RLCY…VDKE) and 121 to 206 (IVEM…VDKE). The tract at residues 230 to 258 (GSVKEAPAPTPTSLEVSSPPDTTEEEDHK) is disordered. The span at 240 to 250 (PTSLEVSSPPD) shows a compositional bias: polar residues. The 81-residue stretch at 261-341 (LCRLAKGENG…NVTLLVCGKK (81 aa)) folds into the PDZ 3 domain. Residues 362–402 (DTPPDSKEGIVVESKHDSHMAKERAHSTASHSSSNSEDTEM) are disordered. The span at 365–387 (PDSKEGIVVESKHDSHMAKERAH) shows a compositional bias: basic and acidic residues. The segment covering 388 to 402 (STASHSSSNSEDTEM) has biased composition (low complexity).

Belongs to the NHER family.

The chain is Putative PDZ domain-containing protein PDZK1P1 from Homo sapiens (Human).